We begin with the raw amino-acid sequence, 418 residues long: Putative competence-damage inducible protein (418 aa).

Belongs to the CinA family.

This Streptococcus pneumoniae serotype 2 (strain D39 / NCTC 7466) protein is Putative competence-damage inducible protein.